We begin with the raw amino-acid sequence, 540 residues long: Chaperonin GroEL 1 (540 aa).

Residues Thr-29 to Pro-32, Asp-86 to Thr-90, Gly-415, Asn-479 to Ala-481, and Asp-495 each bind ATP.

Belongs to the chaperonin (HSP60) family. Forms a cylinder of 14 subunits composed of two heptameric rings stacked back-to-back. Interacts with the co-chaperonin GroES.

The protein resides in the cytoplasm. It catalyses the reaction ATP + H2O + a folded polypeptide = ADP + phosphate + an unfolded polypeptide.. In terms of biological role, together with its co-chaperonin GroES, plays an essential role in assisting protein folding. The GroEL-GroES system forms a nano-cage that allows encapsulation of the non-native substrate proteins and provides a physical environment optimized to promote and accelerate protein folding. The protein is Chaperonin GroEL 1 of Streptomyces albus G.